A 380-amino-acid chain; its full sequence is Kappa-type opioid receptor (380 aa).

The Extracellular portion of the chain corresponds to 1-57 (MDSPIQIFRGEPGPTCAPSACLPPNSSAWFPGWAEPDSNGSAGSEDAQLEPAHISPA). 2 N-linked (GlcNAc...) asparagine glycosylation sites follow: Asn-25 and Asn-39. A helical transmembrane segment spans residues 58-85 (IPVIITAVYSVVFVVGLVGNSLVMFVII). Residues 86-95 (RYTKMKTATN) lie on the Cytoplasmic side of the membrane. A helical membrane pass occupies residues 96 to 119 (IYIFNLALADALVTTTMPFQSTVY). At 120-132 (LMNSWPFGDVLCK) the chain is on the extracellular side. Cys-131 and Cys-210 are disulfide-bonded. Residues 133–154 (IVISIDYYNMFTSIFTLTMMSV) form a helical membrane-spanning segment. At 155 to 173 (DRYIAVCHPVKALDFRTPL) the chain is on the cytoplasmic side. The chain crosses the membrane as a helical span at residues 174–196 (KAKIINICIWLLSSSVGISAIVL). Residues 197 to 222 (GGTKVREDVDVIECSLQFPDDDYSWW) lie on the Extracellular side of the membrane. The helical transmembrane segment at 223-247 (DLFMKICVFIFAFVIPVLIIIVCYT) threads the bilayer. Topologically, residues 248–274 (LMILRLKSVRLLSGSREKDRNLRRITR) are cytoplasmic. The chain crosses the membrane as a helical span at residues 275-296 (LVLVVVAVFVVCWTPIHIFILV). Residues 297–311 (EALGSTSHSTAALSS) are Extracellular-facing. The chain crosses the membrane as a helical span at residues 312-333 (YYFCIALGYTNSSLNPILYAFL). Residues 334–380 (DENFKRCFRDFCFPLKMRMERQSTSRVRNTVQDPAYLRDIDGMNKPV) are Cytoplasmic-facing. Residue Cys-345 is the site of S-palmitoyl cysteine attachment.

This sequence belongs to the G-protein coupled receptor 1 family. In terms of assembly, interacts with NHERF1. Interacts with GABARAPL1. As to expression, detected in brain and placenta.

Its subcellular location is the cell membrane. Functionally, G-protein coupled opioid receptor that functions as a receptor for endogenous alpha-neoendorphins and dynorphins, but has low affinity for beta-endorphins. Also functions as a receptor for various synthetic opioids and for the psychoactive diterpene salvinorin A. Ligand binding causes a conformation change that triggers signaling via guanine nucleotide-binding proteins (G proteins) and modulates the activity of down-stream effectors, such as adenylate cyclase. Signaling leads to the inhibition of adenylate cyclase activity. Inhibits neurotransmitter release by reducing calcium ion currents and increasing potassium ion conductance. Plays a role in the perception of pain. Plays a role in mediating reduced physical activity upon treatment with synthetic opioids. Plays a role in the regulation of salivation in response to synthetic opioids. May play a role in arousal and regulation of autonomic and neuroendocrine functions. The sequence is that of Kappa-type opioid receptor (OPRK1) from Homo sapiens (Human).